Consider the following 63-residue polypeptide: Small ribosomal subunit protein eS17 (63 aa).

Belongs to the eukaryotic ribosomal protein eS17 family.

The chain is Small ribosomal subunit protein eS17 from Methanococcus maripaludis (strain DSM 14266 / JCM 13030 / NBRC 101832 / S2 / LL).